Reading from the N-terminus, the 227-residue chain is Cytochrome c oxidase subunit 2 (227 aa).

The Mitochondrial intermembrane portion of the chain corresponds to 1-14 (MAYPLQLGFQDASS). A helical membrane pass occupies residues 15-45 (PIMEELLHFHDHTLMIVFLISSLVLYIISLM). The Mitochondrial matrix segment spans residues 46–59 (LTTKLTHTSTMDAQ). The helical transmembrane segment at 60-87 (EVETIWTILPAIILILIALPSLRILYMM) threads the bilayer. At 88–227 (DEINNPSLTV…HFENWTTTML (140 aa)) the chain is on the mitochondrial intermembrane side. Positions 161, 196, 198, 200, 204, and 207 each coordinate Cu cation. Position 198 (Glu-198) interacts with Mg(2+).

This sequence belongs to the cytochrome c oxidase subunit 2 family. Component of the cytochrome c oxidase (complex IV, CIV), a multisubunit enzyme composed of 14 subunits. The complex is composed of a catalytic core of 3 subunits MT-CO1, MT-CO2 and MT-CO3, encoded in the mitochondrial DNA, and 11 supernumerary subunits COX4I, COX5A, COX5B, COX6A, COX6B, COX6C, COX7A, COX7B, COX7C, COX8 and NDUFA4, which are encoded in the nuclear genome. The complex exists as a monomer or a dimer and forms supercomplexes (SCs) in the inner mitochondrial membrane with NADH-ubiquinone oxidoreductase (complex I, CI) and ubiquinol-cytochrome c oxidoreductase (cytochrome b-c1 complex, complex III, CIII), resulting in different assemblies (supercomplex SCI(1)III(2)IV(1) and megacomplex MCI(2)III(2)IV(2)). Found in a complex with TMEM177, COA6, COX18, COX20, SCO1 and SCO2. Interacts with TMEM177 in a COX20-dependent manner. Interacts with COX20. Interacts with COX16. Requires Cu cation as cofactor.

It localises to the mitochondrion inner membrane. The catalysed reaction is 4 Fe(II)-[cytochrome c] + O2 + 8 H(+)(in) = 4 Fe(III)-[cytochrome c] + 2 H2O + 4 H(+)(out). In terms of biological role, component of the cytochrome c oxidase, the last enzyme in the mitochondrial electron transport chain which drives oxidative phosphorylation. The respiratory chain contains 3 multisubunit complexes succinate dehydrogenase (complex II, CII), ubiquinol-cytochrome c oxidoreductase (cytochrome b-c1 complex, complex III, CIII) and cytochrome c oxidase (complex IV, CIV), that cooperate to transfer electrons derived from NADH and succinate to molecular oxygen, creating an electrochemical gradient over the inner membrane that drives transmembrane transport and the ATP synthase. Cytochrome c oxidase is the component of the respiratory chain that catalyzes the reduction of oxygen to water. Electrons originating from reduced cytochrome c in the intermembrane space (IMS) are transferred via the dinuclear copper A center (CU(A)) of subunit 2 and heme A of subunit 1 to the active site in subunit 1, a binuclear center (BNC) formed by heme A3 and copper B (CU(B)). The BNC reduces molecular oxygen to 2 water molecules using 4 electrons from cytochrome c in the IMS and 4 protons from the mitochondrial matrix. This is Cytochrome c oxidase subunit 2 (MT-CO2) from Tupaia glis (Common tree shrew).